The chain runs to 282 residues: tRNA uridine(34) hydroxylase (282 aa).

In terms of domain architecture, Rhodanese spans 128-222 (DGREVVMLDT…YFEEVGADHY (95 aa)). Cysteine 182 acts as the Cysteine persulfide intermediate in catalysis.

Belongs to the TrhO family.

The enzyme catalyses uridine(34) in tRNA + AH2 + O2 = 5-hydroxyuridine(34) in tRNA + A + H2O. Catalyzes oxygen-dependent 5-hydroxyuridine (ho5U) modification at position 34 in tRNAs. This chain is tRNA uridine(34) hydroxylase, found in Ralstonia nicotianae (strain ATCC BAA-1114 / GMI1000) (Ralstonia solanacearum).